Here is a 223-residue protein sequence, read N- to C-terminus: Octanoyltransferase (223 aa).

The 186-residue stretch at 31-216 (GQIGDTLLLL…QIGEVFALEP (186 aa)) folds into the BPL/LPL catalytic domain. Substrate is bound by residues 76–83 (RGGEVTYH), 145–147 (AIG), and 159–161 (GLA). Cysteine 177 acts as the Acyl-thioester intermediate in catalysis.

Belongs to the LipB family.

The protein resides in the cytoplasm. It carries out the reaction octanoyl-[ACP] + L-lysyl-[protein] = N(6)-octanoyl-L-lysyl-[protein] + holo-[ACP] + H(+). It participates in protein modification; protein lipoylation via endogenous pathway; protein N(6)-(lipoyl)lysine from octanoyl-[acyl-carrier-protein]: step 1/2. Its function is as follows. Catalyzes the transfer of endogenously produced octanoic acid from octanoyl-acyl-carrier-protein onto the lipoyl domains of lipoate-dependent enzymes. Lipoyl-ACP can also act as a substrate although octanoyl-ACP is likely to be the physiological substrate. This Chloroflexus aurantiacus (strain ATCC 29366 / DSM 635 / J-10-fl) protein is Octanoyltransferase.